Consider the following 94-residue polypeptide: UPF0381 protein YfcZ (94 aa).

This sequence belongs to the UPF0381 family.

This chain is UPF0381 protein YfcZ (yfcZ), found in Escherichia coli O6:H1 (strain CFT073 / ATCC 700928 / UPEC).